A 2115-amino-acid chain; its full sequence is Non-reducing polyketide synthase PFUR17_0229 (2115 aa).

An N-terminal acylcarrier protein transacylase (SAT) domain (SAT) region spans residues 8 to 246; the sequence is VLFGDQTVDP…ISLPITAAFH (239 aa). A Ketosynthase family 3 (KS3) domain is found at 367–796; sequence SGDIAIVGVA…GGNTSLVLED (430 aa). Active-site for beta-ketoacyl synthase activity residues include Cys-539, His-674, and His-713. Positions 895 to 1218 are malonyl-CoA:ACP transacylase (MAT) domain; that stretch reads IFAFTGQGAQ…SISNAYNSGA (324 aa). Residues 1279–1592 are product template (PT) domain; sequence TTCLQKVESE…KRNILQSLLS (314 aa). The N-terminal hotdog fold stretch occupies residues 1282–1413; the sequence is LQKVESETFT…CTVMYGDGQQ (132 aa). The 307-residue stretch at 1282 to 1588 folds into the PKS/mFAS DH domain; sequence LQKVESETFT…FQKMKRNILQ (307 aa). His-1315 serves as the catalytic Proton acceptor; for dehydratase activity. Residues 1441 to 1588 form a C-terminal hotdog fold region; it reads VHRLLKEMIY…FQKMKRNILQ (148 aa). The Proton donor; for dehydratase activity role is filled by Asp-1501. A disordered region spans residues 1594 to 1613; it reads GHEETPPARPVPSKRTVQGS. The region spanning 1626 to 1703 is the Carrier 1 domain; the sequence is KAASGGFSNI…QLRNFFLDKV (78 aa). Ser-1663 carries the O-(pantetheine 4'-phosphoryl)serine modification. Residues 1710–1742 form a disordered region; it reads FDDEESEMSSSTAGSTPGSSTSHGNQNTTVTTP. Over residues 1718-1733 the composition is skewed to low complexity; it reads SSSTAGSTPGSSTSHG. Positions 1742–1819 constitute a Carrier 2 domain; that stretch reads PAEPDVVAIL…DVQKALGVPS (78 aa). Ser-1779 carries the O-(pantetheine 4'-phosphoryl)serine modification. The thioesterase (TE) domain stretch occupies residues 1861-2097; that stretch reads LFLLPDGAGS…VVGGNHFSIM (237 aa).

Pantetheine 4'-phosphate serves as cofactor.

The catalysed reaction is 6 malonyl-CoA + 2 acetyl-CoA + 5 H(+) = o-orsellinate depside + 6 CO2 + 8 CoA + H2O. In terms of biological role, non-reducing polyketide synthase; part of a gene cluster that mediates the biosynthesis of a yet unidentified depside/depsidone compound. The first step in the pathway is performed by the PKS PFUR17_0229 that condenses 2 acetyl-CoA starter units with 6 malonyl-CoA units to produce lecanoric acid (LA), also known as orsellinate depside. The biosynthesis occurs via the formation of 2 orsellinate intermediates fused together by the C-terminal thioesterase (TE) domain that finally releases lecanoric acid. In addition to the PKS gene, the PFUR17 gene cluster contains closely linked genes encoding a cytochrome P-450 and a laccase (phenol oxidase), directly upstream and downstream respectively, so it is likely that lecanoric acid is an intermediate in a longer biosynthetic pathway. This chain is Non-reducing polyketide synthase PFUR17_0229, found in Pseudevernia furfuracea (Tree moss).